Consider the following 379-residue polypeptide: GDSL esterase/lipase At3g05180 (379 aa).

The signal sequence occupies residues 1 to 27 (METLFHTLLRLLLFVAISHTLSPLAGS). Ser43 serves as the catalytic Nucleophile. N-linked (GlcNAc...) asparagine glycans are attached at residues Asn294 and Asn330. Active-site residues include Asp349 and His352.

This sequence belongs to the 'GDSL' lipolytic enzyme family.

It localises to the secreted. This Arabidopsis thaliana (Mouse-ear cress) protein is GDSL esterase/lipase At3g05180.